Consider the following 670-residue polypeptide: Oxidoreductase PigB (670 aa).

The N-terminal stretch at 1-19 is a signal peptide; sequence MIIQRLFGILYMLAGLAKA. The next 4 helical transmembrane spans lie at 53–73, 76–96, 98–118, and 238–258; these read GDVINILVGVVLFGSGVILML, LWTTLVIYAQLLMMAVFVVIL, QSQPQVMLLDGVFALAALYML, and LVFFDTFLLLKCLGEIVVGFI.

It belongs to the flavin monoamine oxidase family. The cofactor is FAD.

It localises to the membrane. Its pathway is antibiotic biosynthesis; prodigiosin biosynthesis. Involved in the biosynthesis of 2-methyl-3-n-amyl-pyrrole (MAP), one of the terminal products involved in the biosynthesis of the red antibiotic prodigiosin (Pig). Catalyzes the oxidation of dihydro form of MAP (H2MAP) to yield MAP. This chain is Oxidoreductase PigB, found in Serratia sp. (strain ATCC 39006) (Prodigiosinella confusarubida).